The following is a 472-amino-acid chain: Uronate isomerase (472 aa).

This sequence belongs to the metallo-dependent hydrolases superfamily. Uronate isomerase family.

It catalyses the reaction D-glucuronate = D-fructuronate. It carries out the reaction aldehydo-D-galacturonate = keto-D-tagaturonate. Its pathway is carbohydrate metabolism; pentose and glucuronate interconversion. The chain is Uronate isomerase from Xanthomonas euvesicatoria pv. vesicatoria (strain 85-10) (Xanthomonas campestris pv. vesicatoria).